We begin with the raw amino-acid sequence, 138 residues long: Acidic phospholipase A2 5 (138 aa).

The first 16 residues, 1-16 (MRTLWIVAVWLIGVEG), serve as a signal peptide directing secretion. 7 cysteine pairs are disulfide-bonded: Cys-42-Cys-131, Cys-44-Cys-60, Cys-59-Cys-111, Cys-65-Cys-138, Cys-66-Cys-104, Cys-73-Cys-97, and Cys-91-Cys-102. Residues Tyr-43, Gly-45, and Gly-47 each contribute to the Ca(2+) site. Residue His-63 is part of the active site. Residue Asp-64 participates in Ca(2+) binding. The active site involves Asp-105.

Belongs to the phospholipase A2 family. Group II subfamily. D49 sub-subfamily. Ca(2+) is required as a cofactor. Expressed by the venom gland.

The protein localises to the secreted. The catalysed reaction is a 1,2-diacyl-sn-glycero-3-phosphocholine + H2O = a 1-acyl-sn-glycero-3-phosphocholine + a fatty acid + H(+). Its function is as follows. PLA2 catalyzes the calcium-dependent hydrolysis of the 2-acyl groups in 3-sn-phosphoglycerides. In Echis ocellatus (Ocellated saw-scaled viper), this protein is Acidic phospholipase A2 5.